A 101-amino-acid polypeptide reads, in one-letter code: Feather keratin Cos2-3 (101 aa).

Serine 2 is modified (N-acetylserine).

It belongs to the avian keratin family. In terms of assembly, the avian keratins (F-ker, S-ker, C-ker and B-ker) are a complex mixture of very similar polypeptides.

The protein is Feather keratin Cos2-3 of Columba livia (Rock dove).